A 321-amino-acid chain; its full sequence is MVEIVGHRAFKARYPENTLLAFEKAYAAGADVIETDLQMTSDGMVVVNHDSDTGRMWDKNLVIGESTWEEVKRLRCKEDGSLAMMTLKEILTWAVCHPGAKLMLDIKFTNEKIIMIKTFVIMLEVKNDLKFWQERITWGLWLLDWYDFGIETGVLKDFKVIVISLSLDIASQFVKRSLTLNDPHYKLFGISVHFVSSWTSQFRLRLLPVLMKNDIKVYLWTVNKPIDFKYLCELPIHGAITDDPIKARKLCDGHTVAKKPTAEKKFVAPSLASVDGLRFHAFIKVYNILCTLLYSKWVHIKLCGWSIAYVIFLFLRTIHFL.

A GP-PDE domain is found at V2–C251. Residues W297–L315 traverse the membrane as a helical; Anchor for type IV membrane protein segment.

The protein belongs to the glycerophosphoryl diester phosphodiesterase family.

The protein resides in the mitochondrion membrane. It is found in the lipid droplet. It catalyses the reaction a 1,2-diacyl-sn-glycero-3-phospho-(1'-sn-glycerol) + H2O = sn-glycerol 3-phosphate + a 1,2-diacyl-sn-glycerol + H(+). Its function is as follows. Phosphatidylglycerol phospholipase required for the removal of excess phosphatidylglycerol (PG) via a phospholipase C-type degradation mechanism. This Saccharomyces cerevisiae (strain ATCC 204508 / S288c) (Baker's yeast) protein is Phosphatidylglycerol phospholipase C (PGC1).